The primary structure comprises 146 residues: Angiogenin (146 aa).

A signal peptide spans 1–24 (MAMSLCPLLLVFVLGLGLTPPSLA). Pyrrolidone carboxylic acid is present on Gln25. His37 functions as the Proton acceptor in the catalytic mechanism. Arg45 lines the tRNA pocket. 3 cysteine pairs are disulfide-bonded: Cys50/Cys105, Cys63/Cys116, and Cys81/Cys131. Positions 55–59 (VRRHL) match the Nucleolar localization signal motif. 2 residues coordinate tRNA: Cys105 and Ile127. The active-site Proton donor is the His138.

It belongs to the pancreatic ribonuclease family. As to quaternary structure, homodimer. Interacts with RNH1; inhibiting ANG ribonuclease activity. Interacts with PCNA.

Its subcellular location is the secreted. It localises to the nucleus. The protein localises to the nucleolus. It is found in the cytoplasm. The protein resides in the stress granule. Its activity is regulated as follows. Has weak tRNA ribonuclease activity by itself due to partial autoinhibition by its C-terminus, which folds into a short alpha-helix that partially occludes the substrate-binding site. In absence of stress, the ribonuclease activity is inhibited by RNH1 in the cytoplasm. In response to stress, dissociates from RNH1 in the cytoplasm and associates with cytoplasmic ribosomes with vacant A-sites: ribosomes directly activate the tRNA ribonuclease activity of ANG by refolding the C-terminal alpha-helix. In response to stress, the angiogenic activity of ANG is inhibited by RNH1 in the nucleus. Functionally, secreted ribonuclease that can either promote or restrict cell proliferation of target cells, depending on the context. Endocytosed in target cells via its receptor PLXNB2 and translocates to the cytoplasm or nucleus. Under stress conditions, localizes to the cytoplasm and promotes the assembly of stress granules (SGs): specifically cleaves a subset of tRNAs within anticodon loops to produce tRNA-derived stress-induced fragments (tiRNAs), resulting in translation repression and inhibition of cell proliferation. tiRNas also prevent formation of apoptosome, thereby promoting cell survival. Preferentially cleaves RNAs between a pyrimidine and an adenosine residue, suggesting that it cleaves the anticodon loop of tRNA(Ala) (32-UUAGCAU-38) after positions 33 and 36. Cleaves a subset of tRNAs, including tRNA(Ala), tRNA(Glu), tRNA(Gly), tRNA(Lys), tRNA(Val), tRNA(His), tRNA(Asp) and tRNA(Sec). Under growth conditions and in differentiated cells, translocates to the nucleus and stimulates ribosomal RNA (rRNA) transcription, including that containing the initiation site sequences of 45S rRNA, thereby promoting cell growth and proliferation. Angiogenin induces vascularization of normal and malignant tissues via its ability to promote rRNA transcription. Involved in hematopoietic stem and progenitor cell (HSPC) growth and survival by promoting rRNA transcription in growth conditions and inhibiting translation in response to stress, respectively. Mediates the crosstalk between myeloid and intestinal epithelial cells to protect the intestinal epithelial barrier integrity: secreted by myeloid cells and promotes intestinal epithelial cells proliferation and survival. Also mediates osteoclast-endothelial cell crosstalk in growing bone: produced by osteoclasts and protects the neighboring vascular cells against senescence by promoting rRNA transcription. The polypeptide is Angiogenin (ANG) (Equus caballus (Horse)).